Here is a 340-residue protein sequence, read N- to C-terminus: Mitochondrial glycine transporter (340 aa).

Solcar repeat units follow at residues 23–108 (PKTL…ARNG), 128–218 (LSPF…FKND), and 237–325 (RSTI…LIKS). Helical transmembrane passes span 29-54 (LISGASAGLISAISLQPFDLLKTRLQ), 83-109 (GALPSTLRTSVGAGLYFTILSSARNGI), 134-159 (LATGFIVRAVVGIITMPITIVKTRYE), 193-216 (GSFATLARDCPYAGMYVLFYELFK), 241-267 (INTSAAILAASVSTTITAPFDAIKTRL), and 300-318 (GLSLRFGRKGLSSGISWCI).

The protein belongs to the mitochondrial carrier (TC 2.A.29) family. SLC25A38 subfamily.

The protein resides in the mitochondrion inner membrane. It catalyses the reaction glycine(in) = glycine(out). In terms of biological role, mitochondrial glycine transporter that imports glycine into the mitochondrial matrix. Plays an important role in providing glycine for the first enzymatic step in heme biosynthesis, the condensation of glycine with succinyl-CoA to produce 5-aminolevulinate (ALA) in the mitochondrial matrix. This Debaryomyces hansenii (strain ATCC 36239 / CBS 767 / BCRC 21394 / JCM 1990 / NBRC 0083 / IGC 2968) (Yeast) protein is Mitochondrial glycine transporter.